Reading from the N-terminus, the 461-residue chain is Cysteine--tRNA ligase (461 aa).

Cys-30 contributes to the Zn(2+) binding site. A 'HIGH' region motif is present at residues 32 to 42; the sequence is VTVYDLCHIGH. Cys-211, His-236, and Glu-240 together coordinate Zn(2+). The 'KMSKS' region motif lies at 268-272; that stretch reads KMSKS. Position 271 (Lys-271) interacts with ATP.

The protein belongs to the class-I aminoacyl-tRNA synthetase family. As to quaternary structure, monomer. Zn(2+) serves as cofactor.

It is found in the cytoplasm. The enzyme catalyses tRNA(Cys) + L-cysteine + ATP = L-cysteinyl-tRNA(Cys) + AMP + diphosphate. This Shewanella sp. (strain MR-7) protein is Cysteine--tRNA ligase.